Consider the following 504-residue polypeptide: Ribose import ATP-binding protein RbsA (504 aa).

ABC transporter domains lie at 6–242 (LELK…VGRR) and 252–495 (VRHG…VGKT). 38-45 (GENGAGKS) serves as a coordination point for ATP.

This sequence belongs to the ABC transporter superfamily. Ribose importer (TC 3.A.1.2.1) family. The complex is composed of an ATP-binding protein (RbsA), two transmembrane proteins (RbsC) and a solute-binding protein (RbsB).

It localises to the cell inner membrane. It carries out the reaction D-ribose(out) + ATP + H2O = D-ribose(in) + ADP + phosphate + H(+). Its function is as follows. Part of the ABC transporter complex RbsABC involved in ribose import. Responsible for energy coupling to the transport system. This chain is Ribose import ATP-binding protein RbsA, found in Photobacterium profundum (strain SS9).